A 427-amino-acid chain; its full sequence is Trigger factor (427 aa).

Positions 163-248 (GDTAVIDFEG…VHEIKAKELP (86 aa)) constitute a PPIase FKBP-type domain.

The protein belongs to the FKBP-type PPIase family. Tig subfamily.

It is found in the cytoplasm. The catalysed reaction is [protein]-peptidylproline (omega=180) = [protein]-peptidylproline (omega=0). In terms of biological role, involved in protein export. Acts as a chaperone by maintaining the newly synthesized protein in an open conformation. Functions as a peptidyl-prolyl cis-trans isomerase. The protein is Trigger factor of Bacillus cytotoxicus (strain DSM 22905 / CIP 110041 / 391-98 / NVH 391-98).